Here is a 176-residue protein sequence, read N- to C-terminus: Late lactation protein A (176 aa).

The first 18 residues, 1-18 (MRVLFLTISLSLFSIIHA), serve as a signal peptide directing secretion. A disulfide bridge connects residues Cys-78 and Cys-171.

Belongs to the calycin superfamily. Lipocalin family. As to expression, mammary gland specific. Secreted in milk.

It localises to the secreted. In terms of biological role, probably serves a role in the transport of a small ligand released during the hydrolysis of milk fat. This chain is Late lactation protein A (LLPA), found in Notamacropus eugenii (Tammar wallaby).